Consider the following 244-residue polypeptide: Mediator of RNA polymerase II transcription subunit 19 (244 aa).

Disordered regions lie at residues 1–56 and 171–244; these read MENF…PGAD and PKKK…SSLR. The segment covering 26-47 has biased composition (pro residues); that stretch reads GKPPPPPPPPAGGGPGTAPPPT. Residues 171–182 are compositionally biased toward basic residues; it reads PKKKNKHKHKQS. Ser194 bears the Phosphoserine mark. Residues 212 to 224 show a composition bias toward basic residues; that stretch reads KRKKKEKKKKKNR. Ser226 carries the phosphoserine modification. Residues 234–244 show a composition bias toward low complexity; sequence SSQASSSSSLR.

This sequence belongs to the Mediator complex subunit 19 family. Component of the Mediator complex, which is composed of MED1, MED4, MED6, MED7, MED8, MED9, MED10, MED11, MED12, MED13, MED13L, MED14, MED15, MED16, MED17, MED18, MED19, MED20, MED21, MED22, MED23, MED24, MED25, MED26, MED27, MED29, MED30, MED31, CCNC, CDK8 and CDC2L6/CDK11. The MED12, MED13, CCNC and CDK8 subunits form a distinct module termed the CDK8 module. Mediator containing the CDK8 module is less active than Mediator lacking this module in supporting transcriptional activation. Individual preparations of the Mediator complex lacking one or more distinct subunits have been variously termed ARC, CRSP, DRIP, PC2, SMCC and TRAP.

The protein resides in the nucleus. Component of the Mediator complex, a coactivator involved in the regulated transcription of nearly all RNA polymerase II-dependent genes. Mediator functions as a bridge to convey information from gene-specific regulatory proteins to the basal RNA polymerase II transcription machinery. Mediator is recruited to promoters by direct interactions with regulatory proteins and serves as a scaffold for the assembly of a functional preinitiation complex with RNA polymerase II and the general transcription factors. In Homo sapiens (Human), this protein is Mediator of RNA polymerase II transcription subunit 19 (MED19).